The chain runs to 808 residues: Dynamin-related protein 3A (808 aa).

Positions 1–31 (MTIEEVSGETPPSTPPSSSTPSPSSSTTNAA) are disordered. The span at 16 to 28 (PSSSTPSPSSSTT) shows a compositional bias: low complexity. The region spanning 56-330 (TIALPQVVVV…LVQHIKVLLP (275 aa)) is the Dynamin-type G domain. The tract at residues 66–73 (GSQSSGKS) is G1 motif. 66–73 (GSQSSGKS) provides a ligand contact to GTP. A G2 motif region spans residues 92–94 (CTR). Residues 172–175 (DLPG) are G3 motif. Residues 172 to 176 (DLPGI) and 241 to 244 (TKLD) each bind GTP. The tract at residues 241-244 (TKLD) is G4 motif. The segment at 271–274 (VNRC) is G5 motif. The disordered stretch occupies residues 548-578 (IPHPVARPKDTVEPDRTSSSTSQVKSRSFLG). Basic and acidic residues predominate over residues 554–563 (RPKDTVEPDR). Residues 564-575 (TSSSTSQVKSRS) show a composition bias toward low complexity. The 92-residue stretch at 670–761 (IQITKLLLRS…TLDELPLEAD (92 aa)) folds into the GED domain. The interval 774-808 (LTSSKYSTSSSYSASPSTTRRSRRAGDQHQNGYGF) is disordered. The segment covering 775–792 (TSSKYSTSSSYSASPSTT) has biased composition (low complexity).

This sequence belongs to the TRAFAC class dynamin-like GTPase superfamily. Dynamin/Fzo/YdjA family. In terms of assembly, homooligomer. Interacts with ARC5 on peroxisomes and ELM1 on mitochondria. As to expression, ubiquitous. Preferentially expressed in flowers.

It is found in the mitochondrion. The protein localises to the peroxisome. Functionally, involved in the control of mitochondrial and peroxisomal division and morphology. In association with PEX11C, PEX11D, PEX11E and FIS1B, is involved in cell cycle-associated constitutive self-replication of preexisting peroxisomes. The chain is Dynamin-related protein 3A (DRP3A) from Arabidopsis thaliana (Mouse-ear cress).